The following is a 296-amino-acid chain: Maltose/maltodextrin transport system permease protein MalG (296 aa).

At 1–12 (MAMVQPKSQKAR) the chain is on the cytoplasmic side. A helical transmembrane segment spans residues 13–35 (LFITHLLLLLFIAAIMFPLLMVV). Residues 36–88 (AISLRQGNFATGSLIPEQISWDHWKLALGFSVEQADGRITPPPFPVLLWLWNS) are Periplasmic-facing. In terms of domain architecture, ABC transmembrane type-1 spans 85–281 (LWNSVKVAGI…LPITIVFLLA (197 aa)). The chain crosses the membrane as a helical span at residues 89-111 (VKVAGISAIGIVALSTTCAYAFA). The Cytoplasmic portion of the chain corresponds to 112 to 123 (RMRFPGKATLLK). The helical transmembrane segment at 124 to 143 (GMLIFQMFPAVLSLVALYAL) threads the bilayer. Residues 144-152 (FDRLGEYIP) lie on the Periplasmic side of the membrane. A helical membrane pass occupies residues 153 to 175 (FIGLNTHGGVIFAYLGGIALHVW). At 176–204 (TIKGYFETIDSSLEEAAALDGATPWQAFR) the chain is on the cytoplasmic side. A helical transmembrane segment spans residues 205–227 (LVLLPLSVPILAVVFILSFIAAI). The Periplasmic segment spans residues 228–257 (TEVPVASLLLRDVNSYTLAVGMQQYLNPQN). The chain crosses the membrane as a helical span at residues 258–280 (YLWGDFAAAAVMSALPITIVFLL). Topologically, residues 281-296 (AQRWLVNGLTAGGVKG) are cytoplasmic.

This sequence belongs to the binding-protein-dependent transport system permease family. MalFG subfamily. In terms of assembly, the complex is composed of two ATP-binding proteins (MalK), two transmembrane proteins (MalG and MalF) and a solute-binding protein (MalE).

The protein localises to the cell inner membrane. Part of the ABC transporter complex MalEFGK involved in maltose/maltodextrin import. Probably responsible for the translocation of the substrate across the membrane. The protein is Maltose/maltodextrin transport system permease protein MalG (malG) of Escherichia coli O157:H7.